We begin with the raw amino-acid sequence, 180 residues long: Large ribosomal subunit protein uL5 (180 aa).

The protein belongs to the universal ribosomal protein uL5 family. Part of the 50S ribosomal subunit; part of the 5S rRNA/L5/L18/L25 subcomplex. Contacts the 5S rRNA and the P site tRNA. Forms a bridge to the 30S subunit in the 70S ribosome.

In terms of biological role, this is one of the proteins that bind and probably mediate the attachment of the 5S RNA into the large ribosomal subunit, where it forms part of the central protuberance. In the 70S ribosome it contacts protein S13 of the 30S subunit (bridge B1b), connecting the 2 subunits; this bridge is implicated in subunit movement. Contacts the P site tRNA; the 5S rRNA and some of its associated proteins might help stabilize positioning of ribosome-bound tRNAs. The chain is Large ribosomal subunit protein uL5 from Streptococcus agalactiae serotype Ia (strain ATCC 27591 / A909 / CDC SS700).